Reading from the N-terminus, the 650-residue chain is L-aspartate N-monooxygenase (nitrosuccinate-forming) (650 aa).

Belongs to the nitrosuccinic acid synthase family. It depends on FAD as a cofactor.

It carries out the reaction L-aspartate + 3 NADPH + 3 O2 + 2 H(+) = 2-nitrobutanedioate + 3 NADP(+) + 4 H2O. Its function is as follows. Involved in the biosynthesis of desferrioxamine derivatives which have iron-binding properties and may act as siderophores. Catalyzes the iterative oxidation of L-aspartic acid to nitrosuccinic acid (2-nitrobutanedioate) via N-hydroxyaspartic acid and nitrososuccinic acid. This is L-aspartate N-monooxygenase (nitrosuccinate-forming) from Streptomyces davaonensis (strain DSM 101723 / JCM 4913 / KCC S-0913 / 768).